Here is a 161-residue protein sequence, read N- to C-terminus: Nucleotide-binding protein HCH_04620 (161 aa).

The protein belongs to the YajQ family.

In terms of biological role, nucleotide-binding protein. In Hahella chejuensis (strain KCTC 2396), this protein is Nucleotide-binding protein HCH_04620.